A 136-amino-acid chain; its full sequence is Glutaredoxin-C7 (136 aa).

The 107-residue stretch at 29-135 folds into the Glutaredoxin domain; sequence LLRIESLASE…PLLKDAGALW (107 aa). Residues Cys49 and Cys52 are joined by a disulfide bond. The short motif at 133–136 is the Responsive for interaction with TGA factors element; it reads ALWL.

Belongs to the glutaredoxin family. CC-type subfamily. As to quaternary structure, interacts with TGA2, TGA3, TGA7 and PAN. Interacts with TGA9 and TGA10 in the nucleus. Highly expressed in inflorescences, roots, and siliques. Expressed at lower levels in mature flowers.

The protein resides in the cytoplasm. It localises to the nucleus. Has a glutathione-disulfide oxidoreductase activity in the presence of NADPH and glutathione reductase. Reduces low molecular weight disulfides and proteins. Involved in flower development as a regulator of petal primorida initiation and further petal morphogenesis. May mediate post-translational modifications of target proteins required for normal petal organ initiation and morphogenesis. ROXY1/TGA protein interactions can occur in vivo and support their biological relevance in petal development. May be involved in the regulation of the floral regulator class C gene AG (AGAMOUS). This is Glutaredoxin-C7 (GRXC7) from Arabidopsis thaliana (Mouse-ear cress).